The primary structure comprises 387 residues: Protein RecA (387 aa).

78-85 (GPESSGKT) is an ATP binding site. The span at 355–369 (KSIERDTKETKETKS) shows a compositional bias: basic and acidic residues. Residues 355–387 (KSIERDTKETKETKSKQPVSFSTEADGDIAVGE) are disordered.

This sequence belongs to the RecA family.

The protein resides in the cytoplasm. Functionally, can catalyze the hydrolysis of ATP in the presence of single-stranded DNA, the ATP-dependent uptake of single-stranded DNA by duplex DNA, and the ATP-dependent hybridization of homologous single-stranded DNAs. It interacts with LexA causing its activation and leading to its autocatalytic cleavage. The sequence is that of Protein RecA from Leptospira biflexa serovar Patoc (strain Patoc 1 / ATCC 23582 / Paris).